The primary structure comprises 189 residues: ATP synthase subunit delta (189 aa).

The protein belongs to the ATPase delta chain family. In terms of assembly, F-type ATPases have 2 components, F(1) - the catalytic core - and F(0) - the membrane proton channel. F(1) has five subunits: alpha(3), beta(3), gamma(1), delta(1), epsilon(1). F(0) has three main subunits: a(1), b(2) and c(10-14). The alpha and beta chains form an alternating ring which encloses part of the gamma chain. F(1) is attached to F(0) by a central stalk formed by the gamma and epsilon chains, while a peripheral stalk is formed by the delta and b chains.

The protein resides in the cell inner membrane. In terms of biological role, f(1)F(0) ATP synthase produces ATP from ADP in the presence of a proton or sodium gradient. F-type ATPases consist of two structural domains, F(1) containing the extramembraneous catalytic core and F(0) containing the membrane proton channel, linked together by a central stalk and a peripheral stalk. During catalysis, ATP synthesis in the catalytic domain of F(1) is coupled via a rotary mechanism of the central stalk subunits to proton translocation. Functionally, this protein is part of the stalk that links CF(0) to CF(1). It either transmits conformational changes from CF(0) to CF(1) or is implicated in proton conduction. This chain is ATP synthase subunit delta, found in Rickettsia bellii (strain OSU 85-389).